Consider the following 132-residue polypeptide: MDLRTGVPITAAQAANGVFIWELRNPLYFKIRLVETPMYTRSRVFHIQVRANHNMRTALGLHKAYFNFQVWTTLTTISGQIYLNRFKLLVMFYLDNLGLISVNNVIRAVSFATDKRYVNAVLENHEIIYKLY.

Belongs to the geminiviridae replication enhancer protein family. As to quaternary structure, homooligomer. Interacts with the replication-associated protein (REP). Interacts with host proliferating cell nuclear antigen (PCNA). Interacts with host retinoblastoma-related protein 1 (RBR1), and may thereby deregulate the host cell cycle. Oligomerization and interaction with PCNA are necessary for optimal replication enhancement.

In terms of biological role, increases viral DNA accumulation. Enhances infectivity and symptom expression. This chain is Replication enhancer protein, found in Pepper huasteco yellow vein virus (PHYVV).